A 509-amino-acid polypeptide reads, in one-letter code: Putative cytochrome P450 CYP13A8 (509 aa).

C455 lines the heme pocket.

Belongs to the cytochrome P450 family. It depends on heme as a cofactor.

Functionally, cytochromes P450 are a group of heme-thiolate monooxygenases. They oxidize a variety of structurally unrelated compounds, including steroids, fatty acids, and xenobiotics. In Caenorhabditis elegans, this protein is Putative cytochrome P450 CYP13A8 (cyp-13A8).